The following is a 39-amino-acid chain: Cytochrome b559 subunit beta (39 aa).

Residues 14–30 (WLAIHGLAVPTVFSLGS) traverse the membrane as a helical segment. H18 provides a ligand contact to heme.

Belongs to the PsbE/PsbF family. As to quaternary structure, heterodimer of an alpha subunit and a beta subunit. PSII is composed of 1 copy each of membrane proteins PsbA, PsbB, PsbC, PsbD, PsbE, PsbF, PsbH, PsbI, PsbJ, PsbK, PsbL, PsbM, PsbT, PsbX, PsbY, PsbZ, Psb30/Ycf12, at least 3 peripheral proteins of the oxygen-evolving complex and a large number of cofactors. It forms dimeric complexes. Heme b serves as cofactor.

It is found in the plastid. It localises to the chloroplast thylakoid membrane. Functionally, this b-type cytochrome is tightly associated with the reaction center of photosystem II (PSII). PSII is a light-driven water:plastoquinone oxidoreductase that uses light energy to abstract electrons from H(2)O, generating O(2) and a proton gradient subsequently used for ATP formation. It consists of a core antenna complex that captures photons, and an electron transfer chain that converts photonic excitation into a charge separation. The chain is Cytochrome b559 subunit beta from Huperzia lucidula (Shining clubmoss).